The primary structure comprises 688 residues: Two-component response regulator ORR23 (688 aa).

The Response regulatory domain maps to 25-140 (RVLAVDDDPV…ELRNIWQHVI (116 aa)). Position 76 is a 4-aspartylphosphate (D76). Residues 161-212 (PPNADSDHVHGHVTCGSPDQSGRPSKKRKEYCSEEEDEGEVNTQDIDDPSAP) form a disordered region. A compositionally biased stretch (acidic residues) spans 193–208 (SEEEDEGEVNTQDIDD). The myb-like GARP DNA-binding region spans 211-270 (APKKPRVVWSVELHRKFVAAVNQLGIDKAVPKRILELMNVEKLTRENVASHLQKYRLYLK).

The protein belongs to the ARR family. Type-B subfamily. Two-component system major event consists of a His-to-Asp phosphorelay between a sensor histidine kinase (HK) and a response regulator (RR). In plants, the His-to-Asp phosphorelay involves an additional intermediate named Histidine-containing phosphotransfer protein (HPt). This multistep phosphorelay consists of a His-Asp-His-Asp sequential transfer of a phosphate group between first a His and an Asp of the HK protein, followed by the transfer to a conserved His of the HPt protein and finally the transfer to an Asp in the receiver domain of the RR protein.

The protein resides in the nucleus. Transcriptional activator that binds specific DNA sequence. Functions as a response regulator involved in His-to-Asp phosphorelay signal transduction system. Phosphorylation of the Asp residue in the receiver domain activates the ability of the protein to promote the transcription of target genes. May directly activate some type-A response regulators in response to cytokinins. The sequence is that of Two-component response regulator ORR23 from Oryza sativa subsp. japonica (Rice).